The sequence spans 62 residues: Large ribosomal subunit protein bL28 (62 aa).

The protein belongs to the bacterial ribosomal protein bL28 family.

The chain is Large ribosomal subunit protein bL28 from Thermoanaerobacter sp. (strain X514).